The primary structure comprises 242 residues: Neuromodulin (242 aa).

Positions 1-242 are disordered; the sequence is MLCCMRRTKQ…EEREADQEHA (242 aa). 2 S-palmitoyl cysteine lipidation sites follow: Cys-3 and Cys-4. Over residues 9 to 32 the composition is skewed to basic and acidic residues; the sequence is KQVEKNDEDQKIEQDGIKPEDKAH. The region spanning 31-60 is the IQ domain; it reads AHKAATKIQASFRGHITRKKLKGEKKGDAQ. Ser-41 is subject to Phosphoserine; by PHK and PKC. Composition is skewed to basic and acidic residues over residues 66 to 84 and 98 to 117; these read GNEK…KEGE and KAEE…KGEG. Residues 142 to 157 are compositionally biased toward polar residues; sequence ETESATKASTDNSPSS. A phosphoserine mark is found at Ser-154, Ser-156, and Ser-157. Over residues 158–170 the composition is skewed to basic and acidic residues; that stretch reads KAEDAPAKEEPKQ. The span at 171 to 203 shows a compositional bias: low complexity; that stretch reads ADVPAAVTAAAAATTPAAEDAAAKATAQPPTDA. Residue Thr-185 is modified to Phosphothreonine. Phosphoserine; by CK2 is present on residues Ser-206 and Ser-207. Over residues 209-242 the composition is skewed to basic and acidic residues; the sequence is AEEKIEAVDETKPKESARQDEGKGEEREADQEHA.

It belongs to the neuromodulin family. Identified in a complex containing FGFR4, NCAM1, CDH2, PLCG1, FRS2, SRC, SHC1, GAP43 and CTTN. Interacts (via IQ domain) with calmodulin. Binds calmodulin with a greater affinity in the absence of Ca(2+) than in its presence. Post-translationally, phosphorylated. Phosphorylation of this protein by a protein kinase C is specifically correlated with certain forms of synaptic plasticity. In terms of processing, palmitoylated by ZDHHC3. Palmitoylation is regulated by ARF6 and is essential for plasma membrane association and axonal and dendritic filopodia induction. Deacylated by LYPLA2.

Its subcellular location is the cell membrane. It is found in the cell projection. It localises to the growth cone membrane. The protein resides in the synapse. The protein localises to the filopodium membrane. Its subcellular location is the perikaryon. It is found in the dendrite. It localises to the axon. The protein resides in the cytoplasm. Its function is as follows. This protein is associated with nerve growth. It is a major component of the motile 'growth cones' that form the tips of elongating axons. Plays a role in axonal and dendritic filopodia induction. The chain is Neuromodulin (GAP43) from Felis catus (Cat).